We begin with the raw amino-acid sequence, 156 residues long: ATP synthase subunit b (156 aa).

The helical transmembrane segment at 3-23 (ITFTIFAQSIAFAALIWIVAT) threads the bilayer.

It belongs to the ATPase B chain family. As to quaternary structure, F-type ATPases have 2 components, F(1) - the catalytic core - and F(0) - the membrane proton channel. F(1) has five subunits: alpha(3), beta(3), gamma(1), delta(1), epsilon(1). F(0) has three main subunits: a(1), b(2) and c(10-14). The alpha and beta chains form an alternating ring which encloses part of the gamma chain. F(1) is attached to F(0) by a central stalk formed by the gamma and epsilon chains, while a peripheral stalk is formed by the delta and b chains.

It localises to the cell inner membrane. In terms of biological role, f(1)F(0) ATP synthase produces ATP from ADP in the presence of a proton or sodium gradient. F-type ATPases consist of two structural domains, F(1) containing the extramembraneous catalytic core and F(0) containing the membrane proton channel, linked together by a central stalk and a peripheral stalk. During catalysis, ATP synthesis in the catalytic domain of F(1) is coupled via a rotary mechanism of the central stalk subunits to proton translocation. Component of the F(0) channel, it forms part of the peripheral stalk, linking F(1) to F(0). This chain is ATP synthase subunit b, found in Xylella fastidiosa (strain M12).